Here is a 199-residue protein sequence, read N- to C-terminus: Protein ZNRD2 (199 aa).

Ala2 bears the N-acetylalanine mark. The Zn(2+) site is built by Cys53, Cys56, Cys70, and Cys73. Positions 93-148 (LSQAREHQLASSTEPASSSRPPSQPPVPRPEHCEGAAAGLKAAQAPPLPAAPPNTD) are disordered. Ser94 carries the post-translational modification Phosphoserine. Over residues 127-137 (GAAAGLKAAQA) the composition is skewed to low complexity. Positions 173 to 194 (SLETSIQLCGLIRACAEALGSL) match the Nuclear export signal motif.

Homodimer. Zn(2+) is required as a cofactor. Expressed in the early postnatal brain.

It localises to the cytoplasm. In terms of biological role, might play a role in mitosis. Could be a centromere-associated protein. Antigenic molecule. May induce anti-centromere antibodies. This chain is Protein ZNRD2 (Znrd2), found in Mus musculus (Mouse).